The chain runs to 363 residues: Phosphoserine aminotransferase (363 aa).

Residue Arg-42 coordinates L-glutamate. Pyridoxal 5'-phosphate is bound by residues 76 to 77, Trp-102, Thr-156, Asp-175, and Gln-198; that span reads GR. N6-(pyridoxal phosphate)lysine is present on Lys-199. Pyridoxal 5'-phosphate is bound at residue 240 to 241; the sequence is NT.

This sequence belongs to the class-V pyridoxal-phosphate-dependent aminotransferase family. SerC subfamily. In terms of assembly, homodimer. The cofactor is pyridoxal 5'-phosphate.

The protein resides in the cytoplasm. The catalysed reaction is O-phospho-L-serine + 2-oxoglutarate = 3-phosphooxypyruvate + L-glutamate. It carries out the reaction 4-(phosphooxy)-L-threonine + 2-oxoglutarate = (R)-3-hydroxy-2-oxo-4-phosphooxybutanoate + L-glutamate. Its pathway is amino-acid biosynthesis; L-serine biosynthesis; L-serine from 3-phospho-D-glycerate: step 2/3. The protein operates within cofactor biosynthesis; pyridoxine 5'-phosphate biosynthesis; pyridoxine 5'-phosphate from D-erythrose 4-phosphate: step 3/5. Catalyzes the reversible conversion of 3-phosphohydroxypyruvate to phosphoserine and of 3-hydroxy-2-oxo-4-phosphonooxybutanoate to phosphohydroxythreonine. The sequence is that of Phosphoserine aminotransferase from Shewanella frigidimarina (strain NCIMB 400).